A 451-amino-acid polypeptide reads, in one-letter code: CBL-interacting protein kinase 10 (451 aa).

One can recognise a Protein kinase domain in the interval 13 to 267 (YEIGKLLGQG…VSEIMEDPWF (255 aa)). Residues 19-27 (LGQGSFAKV) and lysine 42 contribute to the ATP site. Aspartate 135 (proton acceptor) is an active-site residue. The tract at residues 153 to 182 (DFGLSALAECKRQDGLLHTTCGTPAYVAPE) is activation loop. Residues 304 to 336 (INEGKQEAENLTSLNAFDIISLSSGFDLSAMFE) form the NAF domain. The interval 341–370 (KEESKFTSTNTATTITKKLEDVAKNLRLKF) is PPI.

The protein belongs to the protein kinase superfamily. CAMK Ser/Thr protein kinase family. SNF1 subfamily. Mn(2+) serves as cofactor.

It carries out the reaction L-seryl-[protein] + ATP = O-phospho-L-seryl-[protein] + ADP + H(+). The enzyme catalyses L-threonyl-[protein] + ATP = O-phospho-L-threonyl-[protein] + ADP + H(+). Functionally, CIPK serine-threonine protein kinases interact with CBL proteins. Binding of a CBL protein to the regulatory NAF domain of CIPK protein lead to the activation of the kinase in a calcium-dependent manner. In Oryza sativa subsp. japonica (Rice), this protein is CBL-interacting protein kinase 10 (CIPK10).